A 248-amino-acid chain; its full sequence is 14-3-3 protein sigma (248 aa).

Phosphoserine is present on residues Ser-5, Ser-74, and Ser-248.

This sequence belongs to the 14-3-3 family. Homodimer. Interacts with KRT17 and SAMSN1. Found in a complex with XPO7, EIF4A1, ARHGAP1, VPS26A, VPS29 and VPS35. Interacts with GAB2. Interacts with SRPK2. Interacts with COPS6. Interacts with COP1; this interaction leads to proteasomal degradation. Interacts with the 'Thr-369' phosphorylated form of DAPK2. Interacts with PI4KB. Interacts with SLITRK1. Interacts with LRRK2; this interaction is dependent on LRRK2 phosphorylation. Interacts with PKP3 (via N-terminus); the interaction maintains the cytoplasmic pool of PKP3, facilitates PKP3 exchange at desmosomes and restricts PKP3 localization to existing desmosome cell junctions. Interacts with LCP2. Post-translationally, ubiquitinated. Ubiquitination by RFFL induces proteasomal degradation and indirectly regulates p53/TP53 activation.

It is found in the cytoplasm. Its subcellular location is the nucleus. It localises to the secreted. Adapter protein implicated in the regulation of a large spectrum of both general and specialized signaling pathways. Binds to a large number of partners, usually by recognition of a phosphoserine or phosphothreonine motif. Binding generally results in the modulation of the activity of the binding partner. Promotes cytosolic retention of GBP1 GTPase by binding to phosphorylated GBP1, thereby inhibiting the innate immune response. Also acts as a TP53/p53-regulated inhibitor of G2/M progression. When bound to KRT17, regulates protein synthesis and epithelial cell growth by stimulating Akt/mTOR pathway. Acts to maintain desmosome cell junction adhesion in epithelial cells via interacting with and sequestering PKP3 to the cytoplasm, thereby restricting its translocation to existing desmosome structures and therefore maintaining desmosome protein homeostasis. Also acts to facilitate PKP3 exchange at desmosome plaques, thereby maintaining keratinocyte intercellular adhesion. May also regulate MDM2 autoubiquitination and degradation and thereby activate p53/TP53. The polypeptide is 14-3-3 protein sigma (SFN) (Bos taurus (Bovine)).